The sequence spans 429 residues: 3-phosphoshikimate 1-carboxyvinyltransferase (429 aa).

3-phosphoshikimate-binding residues include Lys23, Ser24, and Arg28. Residue Lys23 coordinates phosphoenolpyruvate. Phosphoenolpyruvate-binding residues include Gly95 and Arg123. 3-phosphoshikimate is bound by residues Ser168, Gln170, Asp316, and Lys343. Gln170 lines the phosphoenolpyruvate pocket. Asp316 (proton acceptor) is an active-site residue. Phosphoenolpyruvate-binding residues include Arg347 and Arg389.

The protein belongs to the EPSP synthase family. Monomer.

The protein localises to the cytoplasm. It carries out the reaction 3-phosphoshikimate + phosphoenolpyruvate = 5-O-(1-carboxyvinyl)-3-phosphoshikimate + phosphate. Its pathway is metabolic intermediate biosynthesis; chorismate biosynthesis; chorismate from D-erythrose 4-phosphate and phosphoenolpyruvate: step 6/7. Catalyzes the transfer of the enolpyruvyl moiety of phosphoenolpyruvate (PEP) to the 5-hydroxyl of shikimate-3-phosphate (S3P) to produce enolpyruvyl shikimate-3-phosphate and inorganic phosphate. The polypeptide is 3-phosphoshikimate 1-carboxyvinyltransferase (Bacillus anthracis (strain A0248)).